The primary structure comprises 103 residues: MAKFIRNFAEKAPSMVAAAVTYSKPRLATFWHYAKVELVPPTPAEIPTAIQSVKKIIQSAKTGSFKHLTVKEAVLNGLVATEVWMWFYIGEIIGKRGIVGYDV.

At Ala2 the chain carries N-acetylalanine. An N6-acetyllysine mark is found at Lys11, Lys24, Lys35, and Lys54.

This sequence belongs to the ATPase g subunit family. In terms of assembly, component of the ATP synthase complex composed at least of ATP5F1A/subunit alpha, ATP5F1B/subunit beta, ATP5MC1/subunit c (homooctomer), MT-ATP6/subunit a, MT-ATP8/subunit 8, ATP5ME/subunit e, ATP5MF/subunit f, ATP5MG/subunit g, ATP5MK/subunit k, ATP5MJ/subunit j, ATP5F1C/subunit gamma, ATP5F1D/subunit delta, ATP5F1E/subunit epsilon, ATP5PF/subunit F6, ATP5PB/subunit b, ATP5PD/subunit d, ATP5PO/subunit OSCP. ATP synthase complex consists of a soluble F(1) head domain (subunits alpha(3) and beta(3)) - the catalytic core - and a membrane F(0) domain - the membrane proton channel (subunits c, a, 8, e, f, g, k and j). These two domains are linked by a central stalk (subunits gamma, delta, and epsilon) rotating inside the F1 region and a stationary peripheral stalk (subunits F6, b, d, and OSCP).

It localises to the mitochondrion. The protein localises to the mitochondrion inner membrane. Its function is as follows. Subunit g, of the mitochondrial membrane ATP synthase complex (F(1)F(0) ATP synthase or Complex V) that produces ATP from ADP in the presence of a proton gradient across the membrane which is generated by electron transport complexes of the respiratory chain. ATP synthase complex consist of a soluble F(1) head domain - the catalytic core - and a membrane F(1) domain - the membrane proton channel. These two domains are linked by a central stalk rotating inside the F(1) region and a stationary peripheral stalk. During catalysis, ATP synthesis in the catalytic domain of F(1) is coupled via a rotary mechanism of the central stalk subunits to proton translocation. In vivo, can only synthesize ATP although its ATP hydrolase activity can be activated artificially in vitro. Part of the complex F(0) domain. This is ATP synthase F(0) complex subunit g, mitochondrial from Mus musculus (Mouse).